The primary structure comprises 336 residues: D-erythrose-4-phosphate dehydrogenase (336 aa).

An NAD(+)-binding site is contributed by 11-12 (RI). Substrate-binding positions include 153–155 (SCT), arginine 199, 212–213 (TK), and arginine 235. Cysteine 154 (nucleophile) is an active-site residue. Asparagine 317 serves as a coordination point for NAD(+).

It belongs to the glyceraldehyde-3-phosphate dehydrogenase family. Epd subfamily. In terms of assembly, homotetramer.

The protein resides in the cytoplasm. The enzyme catalyses D-erythrose 4-phosphate + NAD(+) + H2O = 4-phospho-D-erythronate + NADH + 2 H(+). Its pathway is cofactor biosynthesis; pyridoxine 5'-phosphate biosynthesis; pyridoxine 5'-phosphate from D-erythrose 4-phosphate: step 1/5. Catalyzes the NAD-dependent conversion of D-erythrose 4-phosphate to 4-phosphoerythronate. This chain is D-erythrose-4-phosphate dehydrogenase, found in Aeromonas salmonicida (strain A449).